A 399-amino-acid chain; its full sequence is 4-hydroxy-3-methylbut-2-enyl diphosphate reductase (399 aa).

Cys-66 is a binding site for [4Fe-4S] cluster. His-96 lines the (2E)-4-hydroxy-3-methylbut-2-enyl diphosphate pocket. Residue His-96 coordinates dimethylallyl diphosphate. His-96 lines the isopentenyl diphosphate pocket. Cys-157 contributes to the [4Fe-4S] cluster binding site. His-185 lines the (2E)-4-hydroxy-3-methylbut-2-enyl diphosphate pocket. Residue His-185 coordinates dimethylallyl diphosphate. Position 185 (His-185) interacts with isopentenyl diphosphate. Glu-187 acts as the Proton donor in catalysis. Thr-250 is a (2E)-4-hydroxy-3-methylbut-2-enyl diphosphate binding site. Residue Cys-288 coordinates [4Fe-4S] cluster. 4 residues coordinate (2E)-4-hydroxy-3-methylbut-2-enyl diphosphate: Ser-317, Ser-318, Asn-319, and Ser-380. Dimethylallyl diphosphate contacts are provided by Ser-317, Ser-318, Asn-319, and Ser-380. Isopentenyl diphosphate-binding residues include Ser-317, Ser-318, Asn-319, and Ser-380.

The protein belongs to the IspH family. [4Fe-4S] cluster is required as a cofactor.

It catalyses the reaction isopentenyl diphosphate + 2 oxidized [2Fe-2S]-[ferredoxin] + H2O = (2E)-4-hydroxy-3-methylbut-2-enyl diphosphate + 2 reduced [2Fe-2S]-[ferredoxin] + 2 H(+). It carries out the reaction dimethylallyl diphosphate + 2 oxidized [2Fe-2S]-[ferredoxin] + H2O = (2E)-4-hydroxy-3-methylbut-2-enyl diphosphate + 2 reduced [2Fe-2S]-[ferredoxin] + 2 H(+). It functions in the pathway isoprenoid biosynthesis; dimethylallyl diphosphate biosynthesis; dimethylallyl diphosphate from (2E)-4-hydroxy-3-methylbutenyl diphosphate: step 1/1. Its pathway is isoprenoid biosynthesis; isopentenyl diphosphate biosynthesis via DXP pathway; isopentenyl diphosphate from 1-deoxy-D-xylulose 5-phosphate: step 6/6. Its function is as follows. Catalyzes the conversion of 1-hydroxy-2-methyl-2-(E)-butenyl 4-diphosphate (HMBPP) into a mixture of isopentenyl diphosphate (IPP) and dimethylallyl diphosphate (DMAPP). Acts in the terminal step of the DOXP/MEP pathway for isoprenoid precursor biosynthesis. The chain is 4-hydroxy-3-methylbut-2-enyl diphosphate reductase from Synechococcus sp. (strain CC9902).